A 63-amino-acid polypeptide reads, in one-letter code: Large ribosomal subunit protein uL30 (63 aa).

The protein belongs to the universal ribosomal protein uL30 family. As to quaternary structure, part of the 50S ribosomal subunit.

The protein is Large ribosomal subunit protein uL30 of Xylella fastidiosa (strain M23).